The following is a 485-amino-acid chain: Glycogen synthase (485 aa).

Position 21 (K21) interacts with ADP-alpha-D-glucose.

Belongs to the glycosyltransferase 1 family. Bacterial/plant glycogen synthase subfamily.

It carries out the reaction [(1-&gt;4)-alpha-D-glucosyl](n) + ADP-alpha-D-glucose = [(1-&gt;4)-alpha-D-glucosyl](n+1) + ADP + H(+). It functions in the pathway glycan biosynthesis; glycogen biosynthesis. In terms of biological role, synthesizes alpha-1,4-glucan chains using ADP-glucose. The sequence is that of Glycogen synthase from Pseudomonas syringae pv. syringae (strain B728a).